The sequence spans 199 residues: Recombination protein RecR (199 aa).

Residues 58 to 73 (CKKCFNLTSEDECEIC) form a C4-type zinc finger. The Toprim domain maps to 81–175 (KLICVVAETK…KVTRIAYGLP (95 aa)).

The protein belongs to the RecR family.

Its function is as follows. May play a role in DNA repair. It seems to be involved in an RecBC-independent recombinational process of DNA repair. It may act with RecF and RecO. The polypeptide is Recombination protein RecR (Prochlorococcus marinus (strain MIT 9301)).